Consider the following 288-residue polypeptide: MEILIAEHAGFCFGVKRAIEIAYEELNKQKDTRLYTLGEIIHNPQVVKDLEEKGVRVIEEEELEKLLKGDRLIIRSHGISKKLYEFLEQKGVEIIDVTCPFVKKVQNIVEEYYKKGYDIVIVGDKNHPEVIGVNGWCEDKAYIVNSVEEAENLPFFEKACAVSQTTLIEKHWEDILEVLKSKAKELVYFNTICNATQKRQEAADALSKKVDVMFVIGGKHSSNTQKLRKICEKNCKNTYHIERADEITFEMLKGHDIIGITAGASTPDYVIEEVIEKIKSLKGEDENE.

Cysteine 12 serves as a coordination point for [4Fe-4S] cluster. Residues histidine 42 and histidine 77 each coordinate (2E)-4-hydroxy-3-methylbut-2-enyl diphosphate. Residues histidine 42 and histidine 77 each contribute to the dimethylallyl diphosphate site. Residues histidine 42 and histidine 77 each coordinate isopentenyl diphosphate. Cysteine 99 lines the [4Fe-4S] cluster pocket. Histidine 127 is a (2E)-4-hydroxy-3-methylbut-2-enyl diphosphate binding site. Residue histidine 127 coordinates dimethylallyl diphosphate. Histidine 127 is an isopentenyl diphosphate binding site. The active-site Proton donor is glutamate 129. Threonine 165 is a (2E)-4-hydroxy-3-methylbut-2-enyl diphosphate binding site. Cysteine 193 contacts [4Fe-4S] cluster. Residues serine 221, serine 222, asparagine 223, and serine 265 each contribute to the (2E)-4-hydroxy-3-methylbut-2-enyl diphosphate site. Residues serine 221, serine 222, asparagine 223, and serine 265 each contribute to the dimethylallyl diphosphate site. Isopentenyl diphosphate is bound by residues serine 221, serine 222, asparagine 223, and serine 265.

It belongs to the IspH family. [4Fe-4S] cluster is required as a cofactor.

The enzyme catalyses isopentenyl diphosphate + 2 oxidized [2Fe-2S]-[ferredoxin] + H2O = (2E)-4-hydroxy-3-methylbut-2-enyl diphosphate + 2 reduced [2Fe-2S]-[ferredoxin] + 2 H(+). It catalyses the reaction dimethylallyl diphosphate + 2 oxidized [2Fe-2S]-[ferredoxin] + H2O = (2E)-4-hydroxy-3-methylbut-2-enyl diphosphate + 2 reduced [2Fe-2S]-[ferredoxin] + 2 H(+). The protein operates within isoprenoid biosynthesis; dimethylallyl diphosphate biosynthesis; dimethylallyl diphosphate from (2E)-4-hydroxy-3-methylbutenyl diphosphate: step 1/1. Its pathway is isoprenoid biosynthesis; isopentenyl diphosphate biosynthesis via DXP pathway; isopentenyl diphosphate from 1-deoxy-D-xylulose 5-phosphate: step 6/6. Catalyzes the conversion of 1-hydroxy-2-methyl-2-(E)-butenyl 4-diphosphate (HMBPP) into a mixture of isopentenyl diphosphate (IPP) and dimethylallyl diphosphate (DMAPP). Acts in the terminal step of the DOXP/MEP pathway for isoprenoid precursor biosynthesis. This chain is 4-hydroxy-3-methylbut-2-enyl diphosphate reductase, found in Caldanaerobacter subterraneus subsp. tengcongensis (strain DSM 15242 / JCM 11007 / NBRC 100824 / MB4) (Thermoanaerobacter tengcongensis).